The following is a 155-amino-acid chain: Ribosomal RNA large subunit methyltransferase H (155 aa).

S-adenosyl-L-methionine-binding positions include Leu72, Gly103, and 122-127 (LSPLTL).

The protein belongs to the RNA methyltransferase RlmH family. In terms of assembly, homodimer.

It is found in the cytoplasm. It carries out the reaction pseudouridine(1915) in 23S rRNA + S-adenosyl-L-methionine = N(3)-methylpseudouridine(1915) in 23S rRNA + S-adenosyl-L-homocysteine + H(+). Functionally, specifically methylates the pseudouridine at position 1915 (m3Psi1915) in 23S rRNA. This is Ribosomal RNA large subunit methyltransferase H from Mannheimia succiniciproducens (strain KCTC 0769BP / MBEL55E).